We begin with the raw amino-acid sequence, 1122 residues long: Angiopoietin-1 receptor (1122 aa).

An N-terminal signal peptide occupies residues 1–22; that stretch reads MDSLAGLVLCGVSLLLYGVVEG. Over 23–746 the chain is Extracellular; the sequence is AMDLILINSL…SADLGGGKML (724 aa). Cys44 and Cys102 are joined by a disulfide. The region spanning 44 to 123 is the Ig-like C2-type 1 domain; the sequence is CIASGWHPHE…RTMKMRQQAS (80 aa). N-linked (GlcNAc...) asparagine glycans are attached at residues Asn140 and Asn158. 3 consecutive EGF-like domains span residues 210–252, 254–299, and 301–341; these read RCEA…RTCE, ACEP…LQCN, and ACPS…LQCE. 13 disulfide bridges follow: Cys211/Cys220, Cys224/Cys233, Cys227/Cys240, Cys242/Cys251, Cys255/Cys264, Cys268/Cys274, Cys280/Cys287, Cys289/Cys298, Cys302/Cys311, Cys315/Cys323, Cys317/Cys329, Cys331/Cys340, and Cys370/Cys424. The Ig-like C2-type 2 domain occupies 350 to 440; sequence PQIEDLPDHI…GMVEKPFNIS (91 aa). Asn399, Asn438, Asn464, Asn558, Asn595, Asn648, and Asn690 each carry an N-linked (GlcNAc...) asparagine glycan. 3 Fibronectin type-III domains span residues 444 to 539, 543 to 635, and 640 to 733; these read LPEP…TASI, PPRG…TLSD, and QPEN…TLPH. The helical transmembrane segment at 747 to 767 threads the bilayer; sequence LIAILGSAGMTCITVLLAFLI. Residues 768 to 1122 lie on the Cytoplasmic side of the membrane; it reads MLQLKRANVQ…GIDCSAEEAA (355 aa). The region spanning 822-1094 is the Protein kinase domain; it reads IKFQDVIGEG…QILVSLNRML (273 aa). Residues 828–836 and Lys853 each bind ATP; that span reads IGEGNFGQV. At Tyr858 the chain carries Phosphotyrosine; by autocatalysis. Asp962 acts as the Proton acceptor in catalysis. Phosphotyrosine; by autocatalysis occurs at positions 990, 1100, and 1106.

Belongs to the protein kinase superfamily. Tyr protein kinase family. Tie subfamily. In terms of assembly, homodimer. Heterodimer with TIE1. Interacts with ANGPT1, ANGPT2 and ANGPT4. At cell-cell contacts in quiescent cells, forms a signaling complex composed of ANGPT1 plus TEK molecules from two adjoining cells. In the absence of endothelial cell-cell contacts, interaction with ANGPT1 mediates contacts with the extracellular matrix. Interacts (tyrosine phosphorylated) with TNIP2. Interacts (tyrosine phosphorylated) with SHC1 (via SH2 domain). Interacts with PTPRB; this promotes endothelial cell-cell adhesion. Interacts with DOK2, GRB2, GRB7, GRB14, PIK3R1 and PTPN11/SHP2. Colocalizes with DOK2 at contacts with the extracellular matrix in migrating cells. In terms of processing, proteolytic processing leads to the shedding of the extracellular domain (soluble TIE-2 alias sTIE-2). Post-translationally, autophosphorylated on tyrosine residues in response to ligand binding. Autophosphorylation occurs in trans, i.e. one subunit of the dimeric receptor phosphorylates tyrosine residues on the other subunit. Autophosphorylation occurs in a sequential manner, where Tyr-990 in the kinase activation loop is phosphorylated first, followed by autophosphorylation at Tyr-1106 and at additional tyrosine residues. ANGPT1-induced phosphorylation is impaired during hypoxia, due to increased expression of ANGPT2. Phosphorylation is important for interaction with GRB14, PIK3R1 and PTPN11. Phosphorylation at Tyr-1100 is important for interaction with GRB2 and GRB7. Phosphorylation at Tyr-1106 is important for interaction with DOK2 and for coupling to downstream signal transduction pathways in endothelial cells. Dephosphorylated by PTPRB. Ubiquitinated. The phosphorylated receptor is ubiquitinated and internalized, leading to its degradation. Specifically expressed in developing vascular endothelial cells. Abundantly expressed in lung and heart, moderately in brain, liver and kidney, and weakly in thymus, spleen and testis.

It localises to the cell membrane. The protein localises to the cell junction. It is found in the focal adhesion. The protein resides in the cytoplasm. Its subcellular location is the cytoskeleton. It localises to the secreted. The enzyme catalyses L-tyrosyl-[protein] + ATP = O-phospho-L-tyrosyl-[protein] + ADP + H(+). With respect to regulation, angiopoietin binding leads to receptor dimerization and activation by autophosphorylation at Tyr-990 on the kinase activation loop. Functionally, tyrosine-protein kinase that acts as a cell-surface receptor for ANGPT1, ANGPT2 and ANGPT4 and regulates angiogenesis, endothelial cell survival, proliferation, migration, adhesion and cell spreading, reorganization of the actin cytoskeleton, but also maintenance of vascular quiescence. Has anti-inflammatory effects by preventing the leakage of pro-inflammatory plasma proteins and leukocytes from blood vessels. Required for normal angiogenesis and heart development during embryogenesis. Required for postnatal hematopoiesis. After birth, activates or inhibits angiogenesis, depending on the context. Inhibits angiogenesis and promotes vascular stability in quiescent vessels, where endothelial cells have tight contacts. In quiescent vessels, ANGPT1 oligomers recruit TEK to cell-cell contacts, forming complexes with TEK molecules from adjoining cells, and this leads to preferential activation of phosphatidylinositol 3-kinase and the AKT1 signaling cascades. In migrating endothelial cells that lack cell-cell adhesions, ANGT1 recruits TEK to contacts with the extracellular matrix, leading to the formation of focal adhesion complexes, activation of PTK2/FAK and of the downstream kinases MAPK1/ERK2 and MAPK3/ERK1, and ultimately to the stimulation of sprouting angiogenesis. ANGPT1 signaling triggers receptor dimerization and autophosphorylation at specific tyrosine residues that then serve as binding sites for scaffold proteins and effectors. Signaling is modulated by ANGPT2 that has lower affinity for TEK, can promote TEK autophosphorylation in the absence of ANGPT1, but inhibits ANGPT1-mediated signaling by competing for the same binding site. Signaling is also modulated by formation of heterodimers with TIE1, and by proteolytic processing that gives rise to a soluble TEK extracellular domain. The soluble extracellular domain modulates signaling by functioning as decoy receptor for angiopoietins. TEK phosphorylates DOK2, GRB7, GRB14, PIK3R1, SHC1 and TIE1. The sequence is that of Angiopoietin-1 receptor (Tek) from Mus musculus (Mouse).